The chain runs to 155 residues: MAKGEGHILAQNKKARHDYHIVETVEAGIVLTGTEIKSVRATRIQLKDGFAQIKNGEAWLVNVHIAPFEQGNIWNADPERTRKLLLKKREITHLANELKGTGMTLVPLKVYLKDGFAKVLIGLAKGKHDYDKRETIKRRDQERDIKKQMKHYNAR.

The protein belongs to the SmpB family.

Its subcellular location is the cytoplasm. In terms of biological role, required for rescue of stalled ribosomes mediated by trans-translation. Binds to transfer-messenger RNA (tmRNA), required for stable association of tmRNA with ribosomes. tmRNA and SmpB together mimic tRNA shape, replacing the anticodon stem-loop with SmpB. tmRNA is encoded by the ssrA gene; the 2 termini fold to resemble tRNA(Ala) and it encodes a 'tag peptide', a short internal open reading frame. During trans-translation Ala-aminoacylated tmRNA acts like a tRNA, entering the A-site of stalled ribosomes, displacing the stalled mRNA. The ribosome then switches to translate the ORF on the tmRNA; the nascent peptide is terminated with the 'tag peptide' encoded by the tmRNA and targeted for degradation. The ribosome is freed to recommence translation, which seems to be the essential function of trans-translation. This is SsrA-binding protein from Streptococcus pyogenes serotype M5 (strain Manfredo).